We begin with the raw amino-acid sequence, 1169 residues long: ATP-dependent helicase/deoxyribonuclease subunit B (1169 aa).

A UvrD-like helicase ATP-binding domain is found at 1–296; it reads MTLRIVSGRS…QHVEANFANM (296 aa). 8 to 15 is a binding site for ATP; the sequence is GRSGTGKS. The UvrD-like helicase C-terminal domain maps to 276–582; the sequence is YYTQRFQSED…EFSRIPPTLD (307 aa). The [4Fe-4S] cluster site is built by C804, C1129, C1132, and C1138.

Belongs to the helicase family. AddB/RexB type 1 subfamily. As to quaternary structure, heterodimer of AddA and AddB. The cofactor is Mg(2+). It depends on [4Fe-4S] cluster as a cofactor.

In terms of biological role, the heterodimer acts as both an ATP-dependent DNA helicase and an ATP-dependent, dual-direction single-stranded exonuclease. Recognizes the chi site generating a DNA molecule suitable for the initiation of homologous recombination. The AddB subunit has 5' -&gt; 3' nuclease activity but not helicase activity. This is ATP-dependent helicase/deoxyribonuclease subunit B from Lysinibacillus sphaericus (strain C3-41).